Here is a 984-residue protein sequence, read N- to C-terminus: Pre-mRNA-splicing factor cwf10 (984 aa).

Positions 1–28 (MMEEDLYDEFGNYIGPENEEDEEELFPQ) are disordered. A tr-type G domain is found at 139–402 (DDVRSFIVAG…HTLTISDEAE (264 aa)). The segment at 148 to 155 (GHLHHGKS) is G1. 148–155 (GHLHHGKS) provides a ligand contact to GTP. The interval 190–194 (VMSIK) is G2. The segment at 216-219 (DTPG) is G3. Residues 216 to 220 (DTPGH) and 270 to 273 (NKVD) each bind GTP. A G4 region spans residues 270 to 273 (NKVD). The segment at 371 to 373 (QSL) is G5.

This sequence belongs to the TRAFAC class translation factor GTPase superfamily. Classic translation factor GTPase family. EF-G/EF-2 subfamily. Belongs to the 40S cdc5-associated complex (or cwf complex), a spliceosome sub-complex reminiscent of a late-stage spliceosome composed of the U2, U5 and U6 snRNAs and at least brr2, cdc5, cwf2/prp3, cwf3/syf1, cwf4/syf3, cwf5/ecm2, spp42/cwf6, cwf7/spf27, cwf8, cwf9, cwf10, cwf11, cwf12, prp45/cwf13, cwf14, cwf15, cwf16, cwf17, cwf18, cwf19, cwf20, cwf21, cwf22, cwf23, cwf24, cwf25, cwf26, cyp7/cwf27, cwf28, cwf29/ist3, lea1, msl1, prp5/cwf1, prp10, prp12/sap130, prp17, prp22, sap61, sap62, sap114, sap145, slu7, smb1, smd1, smd3, smf1, smg1 and syf2.

The protein resides in the cytoplasm. The protein localises to the nucleus. Functionally, component of the U5 snRNP complex required for pre-mRNA splicing. Binds GTP. The chain is Pre-mRNA-splicing factor cwf10 (cwf10) from Schizosaccharomyces pombe (strain 972 / ATCC 24843) (Fission yeast).